The primary structure comprises 357 residues: O-methyltransferase 9 (357 aa).

G200, D224, N249, F250, and K263 together coordinate S-adenosyl-L-methionine. H267 acts as the Proton acceptor in catalysis.

It belongs to the class I-like SAM-binding methyltransferase superfamily. Cation-independent O-methyltransferase family. COMT subfamily.

The catalysed reaction is (3,5-dichloro-2,4,6-trihydroxyphenyl)hexan-1-one + S-adenosyl-L-methionine = 1-(3,5-dichloro-2,6-dihydroxy-4-methoxyphenyl)hexan-1-one + S-adenosyl-L-homocysteine + H(+). The chain is O-methyltransferase 9 (omt9) from Dictyostelium discoideum (Social amoeba).